We begin with the raw amino-acid sequence, 151 residues long: Small ribosomal subunit protein uS15 (151 aa).

Ser32 carries the phosphoserine modification. Residues Lys39 and Lys43 each participate in a glycyl lysine isopeptide (Lys-Gly) (interchain with G-Cter in ubiquitin) cross-link.

It belongs to the universal ribosomal protein uS15 family. As to quaternary structure, component of the small ribosomal subunit (SSU). Mature yeast ribosomes consist of a small (40S) and a large (60S) subunit. The 40S small subunit contains 1 molecule of ribosomal RNA (18S rRNA) and 33 different proteins (encoded by 57 genes). The large 60S subunit contains 3 rRNA molecules (25S, 5.8S and 5S rRNA) and 46 different proteins (encoded by 81 genes).

It localises to the cytoplasm. Its function is as follows. Component of the ribosome, a large ribonucleoprotein complex responsible for the synthesis of proteins in the cell. The small ribosomal subunit (SSU) binds messenger RNAs (mRNAs) and translates the encoded message by selecting cognate aminoacyl-transfer RNA (tRNA) molecules. The large subunit (LSU) contains the ribosomal catalytic site termed the peptidyl transferase center (PTC), which catalyzes the formation of peptide bonds, thereby polymerizing the amino acids delivered by tRNAs into a polypeptide chain. The nascent polypeptides leave the ribosome through a tunnel in the LSU and interact with protein factors that function in enzymatic processing, targeting, and the membrane insertion of nascent chains at the exit of the ribosomal tunnel. This Saccharomyces cerevisiae (strain ATCC 204508 / S288c) (Baker's yeast) protein is Small ribosomal subunit protein uS15.